The chain runs to 184 residues: ATP synthase subunit delta (184 aa).

It belongs to the ATPase delta chain family. In terms of assembly, F-type ATPases have 2 components, F(1) - the catalytic core - and F(0) - the membrane proton channel. F(1) has five subunits: alpha(3), beta(3), gamma(1), delta(1), epsilon(1). F(0) has three main subunits: a(1), b(2) and c(10-14). The alpha and beta chains form an alternating ring which encloses part of the gamma chain. F(1) is attached to F(0) by a central stalk formed by the gamma and epsilon chains, while a peripheral stalk is formed by the delta and b chains.

It localises to the cell inner membrane. F(1)F(0) ATP synthase produces ATP from ADP in the presence of a proton or sodium gradient. F-type ATPases consist of two structural domains, F(1) containing the extramembraneous catalytic core and F(0) containing the membrane proton channel, linked together by a central stalk and a peripheral stalk. During catalysis, ATP synthesis in the catalytic domain of F(1) is coupled via a rotary mechanism of the central stalk subunits to proton translocation. In terms of biological role, this protein is part of the stalk that links CF(0) to CF(1). It either transmits conformational changes from CF(0) to CF(1) or is implicated in proton conduction. The protein is ATP synthase subunit delta of Caulobacter sp. (strain K31).